The sequence spans 145 residues: RNA polymerase I-specific transcription initiation factor RRN10 (145 aa).

In terms of assembly, component of the UAF (upstream activation factor) complex which consists of UAF30, RRN5, RRN9, RRN10, and histones H3 and H4.

Its subcellular location is the nucleus. The protein localises to the nucleolus. Functionally, component of the UAF (upstream activation factor) complex which interacts with the upstream element of the RNA polymerase I promoter and forms a stable preinitiation complex. Together with SPT15/TBP UAF seems to stimulate basal transcription to a fully activated level. This is RNA polymerase I-specific transcription initiation factor RRN10 (RRN10) from Saccharomyces cerevisiae (strain ATCC 204508 / S288c) (Baker's yeast).